Reading from the N-terminus, the 164-residue chain is MGDPRISHIELDEATIIWRNADIEQERRIAIFDLIEENTFKPLRAFEAGHEGPYRLKLSVEDGRLALTVSDDDGNGGGQLLETVILGLGRFRRPIREYFAICDSYYQAIRKATATEIETIDMARRGVHNEAAEMLLERLQGKIDTDFATARRLFTLICVLHIRG.

Belongs to the UPF0262 family.

The sequence is that of UPF0262 protein Saro_0143 from Novosphingobium aromaticivorans (strain ATCC 700278 / DSM 12444 / CCUG 56034 / CIP 105152 / NBRC 16084 / F199).